The sequence spans 644 residues: Serine/threonine kinase YeaG (644 aa).

It belongs to the PrkA family. In terms of assembly, monomer.

Its subcellular location is the cytoplasm. The catalysed reaction is L-seryl-[protein] + ATP = O-phospho-L-seryl-[protein] + ADP + H(+). The enzyme catalyses L-threonyl-[protein] + ATP = O-phospho-L-threonyl-[protein] + ADP + H(+). Kinase that plays a role in the adaptation to sustained nitrogen starvation. This is Serine/threonine kinase YeaG (yeaG) from Escherichia coli O157:H7.